The following is a 301-amino-acid chain: Homoserine kinase (301 aa).

K89–A99 is an ATP binding site.

Belongs to the GHMP kinase family. Homoserine kinase subfamily.

Its subcellular location is the cytoplasm. It carries out the reaction L-homoserine + ATP = O-phospho-L-homoserine + ADP + H(+). Its pathway is amino-acid biosynthesis; L-threonine biosynthesis; L-threonine from L-aspartate: step 4/5. In terms of biological role, catalyzes the ATP-dependent phosphorylation of L-homoserine to L-homoserine phosphate. In Methanococcus maripaludis (strain DSM 14266 / JCM 13030 / NBRC 101832 / S2 / LL), this protein is Homoserine kinase.